A 323-amino-acid chain; its full sequence is Leucine-rich repeat-containing protein 46 (323 aa).

4 LRR repeats span residues 49–70 (ELETVRLDGEGITCIGNLEKLR), 71–92 (NIHSLYLQSNKIQRIENLACIT), 93–114 (SLRFLSLARNQIRHVENLLDLQ), and 115–135 (YLQFLDLSENLIETLKLDELP). Residues 146–188 (NPCTNQEGYRKMVIGALPLLLDLDKQPILERWTSDEEDKSSDD) form the LRRCT domain. Threonine 178 is modified (phosphothreonine). Residues serine 179, serine 185, and serine 186 each carry the phosphoserine modification. Residues 203–228 (RGFFKDLEQELHQHQERRQQAALTEH) are a coiled coil. Positions 249–323 (MAGDCSSTAT…TKMTNKKSTK (75 aa)) are disordered. Low complexity predominate over residues 267–316 (PKATSSTQTASTTKKQVSKNQKSSVQARKGALAATTSKTSQAATPSMTKM). Serine 303 is subject to Phosphoserine.

As to expression, testis-specific (at protein level).

Its subcellular location is the cell projection. The protein localises to the cilium. The protein resides in the flagellum. Its function is as follows. Required for normal spermatogenesis and male fertility. Plays an important role in sperm flagellum biogenesis. In Mus musculus (Mouse), this protein is Leucine-rich repeat-containing protein 46 (Lrrc46).